Reading from the N-terminus, the 214-residue chain is Large ribosomal subunit protein uL3 (214 aa).

Residues 134–161 (THGNSLSHRAPGSIGQCQTPGRVMKGKK) are disordered. Residue Gln151 is modified to N5-methylglutamine.

Belongs to the universal ribosomal protein uL3 family. Part of the 50S ribosomal subunit. Forms a cluster with proteins L14 and L19. Methylated by PrmB.

Its function is as follows. One of the primary rRNA binding proteins, it binds directly near the 3'-end of the 23S rRNA, where it nucleates assembly of the 50S subunit. The chain is Large ribosomal subunit protein uL3 from Teredinibacter turnerae (strain ATCC 39867 / T7901).